The chain runs to 264 residues: COP9 signalosome complex subunit 7b (264 aa).

N-acetylalanine is present on Ala2. Positions 2–159 (AGEQKPSSNL…QLLEVDFCIG (158 aa)) constitute a PCI domain. Positions 194–237 (RANQYKENHSRTQQQVEAEVTNIKKTLKATASSSAQEMEQQLAE) form a coiled coil. Positions 223 to 232 (TASSSAQEME) are enriched in polar residues. The interval 223–264 (TASSSAQEMEQQLAERECPPHAEQRQPTKKMSKVKGLVSSRH) is disordered. The segment covering 235 to 248 (LAERECPPHAEQRQ) has biased composition (basic and acidic residues).

Belongs to the CSN7/EIF3M family. CSN7 subfamily. As to quaternary structure, component of the CSN complex, composed of COPS1/GPS1, COPS2, COPS3, COPS4, COPS5, COPS6, COPS7 (COPS7A or COPS7B), COPS8 and COPS9. In the complex, it probably interacts directly with COPS1, COPS2, COPS4, COPS5, COPS6 and COPS8. Interacts with EIF3S6.

Its subcellular location is the cytoplasm. The protein resides in the nucleus. Functionally, component of the COP9 signalosome complex (CSN), a complex involved in various cellular and developmental processes. The CSN complex is an essential regulator of the ubiquitin (Ubl) conjugation pathway by mediating the deneddylation of the cullin subunits of SCF-type E3 ligase complexes, leading to decrease the Ubl ligase activity of SCF-type complexes such as SCF, CSA or DDB2. The complex is also involved in phosphorylation of p53/TP53, JUN, I-kappa-B-alpha/NFKBIA, ITPK1 and IRF8/ICSBP, possibly via its association with CK2 and PKD kinases. CSN-dependent phosphorylation of TP53 and JUN promotes and protects degradation by the Ubl system, respectively. The sequence is that of COP9 signalosome complex subunit 7b (COPS7B) from Bos taurus (Bovine).